The chain runs to 723 residues: MDATSKPAGKCPVMHGGNTVSGKSVTEWWPNALNLDILHQHDTKTNPLGTSFNYREALKTLDVEALKADLRALMTDSQEWWPADWGSYVGMMARVTWHAAGSYRVTDGRGGANTGNQRFAPLNSWPDNVNTDKGRRLLWPIKKKYGNKISWADLIALAGTIAYDVAGLKTFGFAFGREDIWAPEKDTYWGDEKEWLAPSDGRYGDVSKPETLENPLAAVQMGLIYVNPEGVNGKSDPLATAAQMRETFARMGMDDEETVALTAGGHTIGKSHGNGSAANLSPDPEAAGPEYQGLGWINTKGRGIGRDTVVSGIEGAWTSEPTKWDNGFFDMLFKHEWTLTHSPAGASQWAPITIAEEDKPVDVEDASIRTIPMMTDADMALKVDPIYREISLKFKDDQDHFSDVFARAWFKLTHRDMGPKSRYVGPDVPAEDLIWQDPIPAGSTSYDVAAVKAKIAASGLSVADLVSTAWDSARTFRGSDKRGGANGARIRLAPQKDWEGNEPARLSRVLSVLEPIARETGASIADVIVLAGNYGVEQAAKAAGFDIAVPFAAGRGDASAEQTDADSFAPLEPLADGFRNWVKKDYVVSPEELLLDRAQLLGLTAPELTVLIGGLRVIGANYGGAAHGVFTDKPGALTTDFFTTLTDMAYSWVPTGNNLYEIRDRKTGAARYSATRVDLVIGSNSILRAYAEVYAQDDNREKFARDFIAAWTKVMNADRFDLI.

The tryptophyl-tyrosyl-methioninium (Trp-Tyr) (with M-251) cross-link spans 97-225 (WHAAGSYRVT…LAAVQMGLIY (129 aa)). Histidine 98 serves as the catalytic Proton acceptor. The segment at residues 225 to 251 (YVNPEGVNGKSDPLATAAQMRETFARM) is a cross-link (tryptophyl-tyrosyl-methioninium (Tyr-Met) (with W-97)). Histidine 266 is a binding site for heme b.

Belongs to the peroxidase family. Peroxidase/catalase subfamily. As to quaternary structure, homodimer or homotetramer. The cofactor is heme b. Post-translationally, formation of the three residue Trp-Tyr-Met cross-link is important for the catalase, but not the peroxidase activity of the enzyme.

It carries out the reaction H2O2 + AH2 = A + 2 H2O. The catalysed reaction is 2 H2O2 = O2 + 2 H2O. Its function is as follows. Bifunctional enzyme with both catalase and broad-spectrum peroxidase activity. Involved in tumorigenesis. The protein is Catalase-peroxidase of Rhizobium radiobacter (Agrobacterium tumefaciens).